We begin with the raw amino-acid sequence, 152 residues long: MATFSEEQEALVNSSWEAFSQNIPQLSIIFYTSILEKAPEAKAMFSFLKDSDGVPKDNLDLEAHCEKVFELTRNSALQLRAKGKVEVERIALKFLGYVHAQRRVLDPHFLVLKEALLKTLKEAMGDKWSEEVSNAWGIAYDELAGVIKKGMS.

Residues 3–152 (TFSEEQEALV…LAGVIKKGMS (150 aa)) form the Globin domain. Tyrosine 31 carries the post-translational modification Nitrated tyrosine. Serine 46 is a binding site for heme b. Serine 46 bears the Phosphoserine mark. Residue histidine 64 coordinates O2. Residues lysine 67, histidine 99, and arginine 102 each contribute to the heme b site. At tyrosine 140 the chain carries Nitrated tyrosine.

It belongs to the plant globin family. Monomer. Post-translationally, nitrated in effective nodules and particularly in hypoxic conditions; this mechanism may play a protective role in the symbiosis by buffering toxic peroxynitrite NO(2)(-). Nitration level decrease during nodule senescence. Phosphorylation at Ser-46 disrupts the molecular environment of its porphyrin ring oxygen binding pocket, thus leading to a reduced oxygen consumption and to the delivery of oxygen O(2) to symbiosomes. Mainly expressed in leaves and, at low levels, in roots of non-nodulated plants. However, accumulates also in nodules and roots, and, to a lower extent, in leaves, stems, flowers and fruits, in nodulated plants.

Functionally, atypical leghemoglobin that reversibly binds oxygen O(2) through a pentacoordinated heme iron. In nodules, facilitates the diffusion of oxygen to the bacteroids while preventing the bacterial nitrogenase from being inactivated by buffering dioxygen, nitric oxide and carbon monoxide. This role is essential for symbiotic nitrogen fixation (SNF). Seems not restricted to symbiotic nitrogen fixation and root nodules formation, but also contributes to general plant development and metabolism. In Lotus japonicus (Lotus corniculatus var. japonicus), this protein is Atypical leghemoglobin 2-1.